We begin with the raw amino-acid sequence, 394 residues long: GDSL esterase/lipase At1g31550 (394 aa).

Residues 1–27 form the signal peptide; that stretch reads MASLDSHVLMKLGSLFLSTLFVSIVSS. The active-site Nucleophile is Ser-43. N-linked (GlcNAc...) asparagine glycosylation is found at Asn-138, Asn-290, and Asn-322. Active-site residues include Asp-345 and His-348.

Belongs to the 'GDSL' lipolytic enzyme family.

Its subcellular location is the secreted. The sequence is that of GDSL esterase/lipase At1g31550 from Arabidopsis thaliana (Mouse-ear cress).